Consider the following 236-residue polypeptide: Phosphoserine phosphatase (236 aa).

Catalysis depends on D30, which acts as the Nucleophile. Mg(2+) contacts are provided by D30 and D32. D32 functions as the Proton donor in the catalytic mechanism. Residues E39, R76, 120–121 (SG), and K169 each bind substrate. D192 lines the Mg(2+) pocket. N195 serves as a coordination point for substrate.

This sequence belongs to the HAD-like hydrolase superfamily. SerB family. The cofactor is Mg(2+).

It carries out the reaction O-phospho-L-serine + H2O = L-serine + phosphate. It catalyses the reaction O-phospho-D-serine + H2O = D-serine + phosphate. It functions in the pathway amino-acid biosynthesis; L-serine biosynthesis; L-serine from 3-phospho-D-glycerate: step 3/3. The chain is Phosphoserine phosphatase from Polaromonas sp. (strain JS666 / ATCC BAA-500).